The primary structure comprises 290 residues: Iron-sulfur cluster carrier protein (290 aa).

47 to 54 (GKGGVGKS) is a binding site for ATP.

This sequence belongs to the Mrp/NBP35 ATP-binding proteins family. Homodimer.

Its function is as follows. Binds and transfers iron-sulfur (Fe-S) clusters to target apoproteins. Can hydrolyze ATP. The protein is Iron-sulfur cluster carrier protein of Methanocaldococcus jannaschii (strain ATCC 43067 / DSM 2661 / JAL-1 / JCM 10045 / NBRC 100440) (Methanococcus jannaschii).